A 150-amino-acid polypeptide reads, in one-letter code: Nucleoside diphosphate kinase (150 aa).

ATP-binding residues include Lys9, Phe57, Arg85, Thr91, Arg102, and Asn112. The Pros-phosphohistidine intermediate role is filled by His115.

Belongs to the NDK family. Mg(2+) serves as cofactor.

The protein resides in the cytoplasm. The enzyme catalyses a 2'-deoxyribonucleoside 5'-diphosphate + ATP = a 2'-deoxyribonucleoside 5'-triphosphate + ADP. It carries out the reaction a ribonucleoside 5'-diphosphate + ATP = a ribonucleoside 5'-triphosphate + ADP. Major role in the synthesis of nucleoside triphosphates other than ATP. The ATP gamma phosphate is transferred to the NDP beta phosphate via a ping-pong mechanism, using a phosphorylated active-site intermediate. This chain is Nucleoside diphosphate kinase, found in Methanothermobacter thermautotrophicus (strain ATCC 29096 / DSM 1053 / JCM 10044 / NBRC 100330 / Delta H) (Methanobacterium thermoautotrophicum).